The chain runs to 443 residues: Signal recognition particle 54 kDa protein (443 aa).

Residues 104–111 (GLQGSGKT), 184–188 (DTAGR), and 242–245 (TKLD) contribute to the GTP site.

This sequence belongs to the GTP-binding SRP family. SRP54 subfamily. In terms of assembly, part of the signal recognition particle protein translocation system, which is composed of SRP and FtsY. Archaeal SRP consists of a 7S RNA molecule of 300 nucleotides and two protein subunits: SRP54 and SRP19.

The protein localises to the cytoplasm. It carries out the reaction GTP + H2O = GDP + phosphate + H(+). Functionally, involved in targeting and insertion of nascent membrane proteins into the cytoplasmic membrane. Binds to the hydrophobic signal sequence of the ribosome-nascent chain (RNC) as it emerges from the ribosomes. The SRP-RNC complex is then targeted to the cytoplasmic membrane where it interacts with the SRP receptor FtsY. The chain is Signal recognition particle 54 kDa protein from Methanosarcina mazei (strain ATCC BAA-159 / DSM 3647 / Goe1 / Go1 / JCM 11833 / OCM 88) (Methanosarcina frisia).